A 285-amino-acid polypeptide reads, in one-letter code: RING finger protein 223 (285 aa).

The segment at 81–132 (CSICFSGYDNIFKTPKELSCSHVFCLECLARLAAAQPAGRSGREAVPCPFCR) adopts an RING-type zinc-finger fold. A helical membrane pass occupies residues 230 to 250 (VALVSVLLLVLFCVILWPVQC).

Its subcellular location is the membrane. This Mus musculus (Mouse) protein is RING finger protein 223 (Rnf223).